The primary structure comprises 444 residues: Argininosuccinate synthase (444 aa).

Residues 18 to 26 and Ala-44 each bind ATP; that span reads AFSGGLDTS. Residue Tyr-100 coordinates L-citrulline. Residues Gly-130 and Thr-132 each coordinate ATP. Residues Thr-132, Asn-136, and Asp-137 each contribute to the L-aspartate site. Asn-136 provides a ligand contact to L-citrulline. Asp-137 lines the ATP pocket. L-citrulline contacts are provided by Arg-140 and Ser-193. An ATP-binding site is contributed by Asp-195. The L-citrulline site is built by Thr-202, Glu-204, and Glu-281.

The protein belongs to the argininosuccinate synthase family. Type 2 subfamily. As to quaternary structure, homotetramer.

Its subcellular location is the cytoplasm. It carries out the reaction L-citrulline + L-aspartate + ATP = 2-(N(omega)-L-arginino)succinate + AMP + diphosphate + H(+). It functions in the pathway amino-acid biosynthesis; L-arginine biosynthesis; L-arginine from L-ornithine and carbamoyl phosphate: step 2/3. The protein is Argininosuccinate synthase of Histophilus somni (strain 129Pt) (Haemophilus somnus).